Reading from the N-terminus, the 871-residue chain is Pentatricopeptide repeat-containing protein At3g06920 (871 aa).

PPR repeat units lie at residues 97–131 (CPESYNSLLLVMARCRNFDALDQILGEMSVAGFGP), 132–166 (SVNTCIEMVLGCVKANKLREGYDVVQMMRKFKFRP), 167–201 (AFSAYTTLIGAFSAVNHSDMMLTLFQQMQELGYEP), 202–236 (TVHLFTTLIRGFAKEGRVDSALSLLDEMKSSSLDA), 237–271 (DIVLYNVCIDSFGKVGKVDMAWKFFHEIEANGLKP), 272–306 (DEVTYTSMIGVLCKANRLDEAVEMFEHLEKNRRVP), 307–341 (CTYAYNTMIMGYGSAGKFDEAYSLLERQRAKGSIP), 342–372 (SVIAYNCILTCLRKMGKVDEALKVFEEMKKD), 376–410 (NLSTYNILIDMLCRAGKLDTAFELRDSMQKAGLFP), 411–445 (NVRTVNIMVDRLCKSQKLDEACAMFEEMDYKVCTP), 446–480 (DEITFCSLIDGLGKVGRVDDAYKVYEKMLDSDCRT), 481–515 (NSIVYTSLIKNFFNHGRKEDGHKIYKDMINQNCSP), 516–550 (DLQLLNTYMDCMFKAGEPEKGRAMFEEIKARRFVP), 551–585 (DARSYSILIHGLIKAGFANETYELFYSMKEQGCVL), 586–620 (DTRAYNIVIDGFCKCGKVNKAYQLLEEMKTKGFEP), 621–655 (TVVTYGSVIDGLAKIDRLDEAYMLFEEAKSKRIEL), 656–690 (NVVIYSSLIDGFGKVGRIDEAYLILEELMQKGLTP), 691–725 (NLYTWNSLLDALVKAEEINEALVCFQSMKELKCTP), 726–760 (NQVTYGILINGLCKVRKFNKAFVFWQEMQKQGMKP), 761–795 (STISYTTMISGLAKAGNIAEAGALFDRFKANGGVP), and 796–830 (DSACYNAMIEGLSNGNRAMDAFSLFEETRRRGLPI).

The protein belongs to the PPR family. P subfamily.

This is Pentatricopeptide repeat-containing protein At3g06920 from Arabidopsis thaliana (Mouse-ear cress).